The primary structure comprises 291 residues: ATP phosphoribosyltransferase (291 aa).

It belongs to the ATP phosphoribosyltransferase family. Long subfamily. The cofactor is Mg(2+).

The protein resides in the cytoplasm. It carries out the reaction 1-(5-phospho-beta-D-ribosyl)-ATP + diphosphate = 5-phospho-alpha-D-ribose 1-diphosphate + ATP. It functions in the pathway amino-acid biosynthesis; L-histidine biosynthesis; L-histidine from 5-phospho-alpha-D-ribose 1-diphosphate: step 1/9. Feedback inhibited by histidine. Catalyzes the condensation of ATP and 5-phosphoribose 1-diphosphate to form N'-(5'-phosphoribosyl)-ATP (PR-ATP). Has a crucial role in the pathway because the rate of histidine biosynthesis seems to be controlled primarily by regulation of HisG enzymatic activity. The protein is ATP phosphoribosyltransferase of Desulfosudis oleivorans (strain DSM 6200 / JCM 39069 / Hxd3) (Desulfococcus oleovorans).